Consider the following 1508-residue polypeptide: MEPTAKGRTEESFSYVIRAPSSEGFDIMNVDVKIDTSWIFQDMEDSAEERECLQEEAAGRPDMDMGALRRQLESSEQKLSAAEDKYVTSESGLRSRIQELELSERKLLRKVDQLSTHVAQERSAWLQAQEKLAALQGELASQIREESVARRQQWRLRRLQERLRRKDEALGQQAAALERCRRTQRRQLGLVREQERVLREQVQRLERNVRRLCRAAGLLLAQWDTAAPGSQGATEAAAELRALQARAERSEREREEAARSLQEHRATERQLRGQLEELRCCIYGLKLSEIGLQGQVEDLAQQNQCLREELGAQAPIGHCSLDALGCVQGDSLPLPREEALDPCRSQDWRNSLRSNDAPRQRAPAGQSPEGPCTWSRIRPGRASSVLAPGPETTSELPRDLAGSNREQLTLAEPSLDEQILLLVCGCPPEECLDESLLRMDLAWISENLAADPAAEAFLLVQTSALPLWGPAGDSASWRPLLLQEVPSDGQKIQEELATRSPPPPKATGHPGWDCHQTRGRGASLFHEAPYISNHPFLKKHPKDLKDTWNNGGGSLAGRTEEGKARGTLGRKGKNLGDKYQLSQESHQNLSLENGAGAAEDVQDQNGASETKAATCRPGSWQEFLMPLLQGEASVSKEGPESLSRRERVEGYVWGLRGGLSSENEEVAPPATFSRAHETKEPWPTDSQLLAGKVRATGRTARGKEENQVWLGNALLLQGGSLEDKGLEEEDEMPHQEASGLGCRGAPEEPDSQEHESKEMLFFAGETGLPLFPRFALSVEGAEPTDHGHPQAVSKGHNRCALTIDELAQDVEACFQQLSTLQPGSRGWQCSASACRGENWSFAQKWHSGWERAHSQQVWGNWGICSNEEAKSKESGEGDKPGKTTALGTSEVPGNPGTLPHWDEASPNPPQGPAEPWGALERVRSRFHQLISGLKKQRSQILHDNTKLHGDQERFHERVCALEREREREVTKISRLERDNHRLVGDISQLKKELDQYLQAISDLEDCNGKSYCKILELEEENETLKGNLGQLQKATSESVRKSKDTMEQVTLENWKLQTLISELGVSYKELIKDIVLGIEDMIRALSGENEHLLRRVHVLEREVTLQRSTDQGRLVRGREHLQGKAKMHALDKEVQVTPLTGQLLSRACGPPLEEEMSLAAGQTGPSTGTGNSRRGADSPPPSLVWRNTGVANALQGNVSGAEVKEAHLEKEEKRPRCSVAQGQALSSLSNGPMLRDSEAEVTEEDPRLRAQQLHHRVLTLQCQLRDQGAAHQASLDEATRLQEELQAKLEELQKKQHEAKLAVTPLKAKIASLVRKCRERNRLITHLLQELHRHGLGNLLLSELAQNMLNDVALAEYTATFLAPGVPETSHHLDVKSEMTAALRAQTYLLNPEMDSVLQSSLSSESWPIPEPEWPAQTAQLDSLKLPLSLVSTLDPGTCLAAVTVEPGLPAQRLQEKGGMPCPALQVDNVPAPSELLSPARILAFHQELRQSICSNSQVHKSPLELEM.

Positions 149–267 (ARRQQWRLRR…ARSLQEHRAT (119 aa)) form a coiled coil. Disordered regions lie at residues 248–268 (ERSE…RATE), 345–403 (SQDW…LAGS), 536–575 (FLKK…GKNL), 725–754 (GLEE…SQEH), and 868–916 (EAKS…AEPW). Positions 868–881 (EAKSKESGEGDKPG) are enriched in basic and acidic residues. Positions 972–1034 (ISRLERDNHR…KGNLGQLQKA (63 aa)) form a coiled coil. 2 disordered regions span residues 1158 to 1186 (LAAG…LVWR) and 1204 to 1246 (KEAH…EEDP). Positions 1163–1172 (TGPSTGTGNS) are enriched in polar residues. Residues 1204-1215 (KEAHLEKEEKRP) are compositionally biased toward basic and acidic residues. Polar residues predominate over residues 1220–1230 (AQGQALSSLSN). Positions 1271–1302 (HQASLDEATRLQEELQAKLEELQKKQHEAKLA) form a coiled coil.

This is an uncharacterized protein from Homo sapiens (Human).